The primary structure comprises 468 residues: Probable xyloglucan galactosyltransferase GT13 (468 aa).

Topologically, residues 1 to 18 (MDKFNPKKEKTVKKRALK) are cytoplasmic. The helical; Signal-anchor for type II membrane protein transmembrane segment at 19 to 35 (VLTEISPTPLFSMLFLL) threads the bilayer. The Lumenal portion of the chain corresponds to 36–468 (HISQIATYLS…RVSLFKMTRI (433 aa)). N-linked (GlcNAc...) asparagine glycans are attached at residues asparagine 53, asparagine 116, asparagine 153, asparagine 240, and asparagine 412.

The protein belongs to the glycosyltransferase 47 family. Expressed in roots, hypocotyls, cotyledons, leaves, stems, petals and carpels.

It localises to the golgi apparatus membrane. In terms of biological role, functions in xyloglucan synthesis by adding side chains to the xylosylated glucan backbone. Involved in the galactosylation of hemicellulose xyloglucan. The protein is Probable xyloglucan galactosyltransferase GT13 of Arabidopsis thaliana (Mouse-ear cress).